Here is a 602-residue protein sequence, read N- to C-terminus: MALSELEKKRQENIRRNQELLKKLDLDSISDSIKKEVDNKSFSSPSSQKRRKTTKKPVIKKEISEPSRRSRRIAGIKSELEDPKQAARIREEEELKQHRKQELERLKRTRLFGDFKLIDLITNKKGDMIFEKNVMDRKLSHIGLDSKVEEKKNEEDKEDEEEAINIDENNRVLQLVQSLGDKFSAGDFYEEIRNSQTNGNSKDKSLDAKRKEFDNLNIYPRFDPLDIKICHNRITSMFFHPSTTNRIVVGGDTTGNVGIWLVDEQNNDTKEEEEDDDDDEPSISILQLHGRNVSKIMTPTFSPEKIYTSSYDGSIRVLDLNKLTSTELLYLNEPGAREDIALGVSDINQCQDSSVIFMTTLDGEFYQHDTRTPFNTRQRHHLATKDLLRLHDKKIGGFAVNPNTNYQIATASLDRTLRIWDLRNVNKSVYSEFENQKSPHMYGNYNSRLSVSCVDWNQENRLVCNGYDDNICLFDYSGGSKLDNELPVITEWKSDFVPSTKSSEESELLPNNLTPFTKIKHNCQTGRWVSILKSHWQTNPADGVQKFIIANMNRGLDIYNQDGQILAHLNEQVGAVPAVCTLHPSQNWAVGGSASGKVYLFE.

The segment at 35-85 (KEVDNKSFSSPSSQKRRKTTKKPVIKKEISEPSRRSRRIAGIKSELEDPKQ) is disordered. Basic residues predominate over residues 48-58 (QKRRKTTKKPV). Residues 59 to 68 (IKKEISEPSR) are compositionally biased toward basic and acidic residues. WD repeat units follow at residues 229 to 270 (ICHN…NDTK), 291 to 328 (RNVSKIMTPTFSPEKIYTSSYDGSIRVLDLNKLTSTEL), 390 to 430 (LHDK…KSVY), 446 to 484 (NSRLSVSCVDWNQENRLVCNGYDDNICLFDYSGGSKLDN), 526 to 569 (GRWV…LAHL), and 571 to 602 (EQVGAVPAVCTLHPSQNWAVGGSASGKVYLFE).

The protein belongs to the WD repeat DDB2/WDR76 family.

In terms of biological role, DNA-binding protein that binds to both single- and double-stranded DNA. Binds preferentially to UV-damaged DNA. May be involved in DNA-metabolic processes. In Candida albicans (strain SC5314 / ATCC MYA-2876) (Yeast), this protein is DNA damage-binding protein CMR1.